Reading from the N-terminus, the 421-residue chain is Aspartokinase (421 aa).

7 to 10 (KYGG) serves as a coordination point for ATP. 25 to 30 (RIVETK) serves as a coordination point for substrate. Residue Ser-41 participates in ATP binding. Residues 45–49 (DTTDD), Glu-74, 125–126 (LD), 151–154 (RGGS), and Ser-154 contribute to the substrate site. Residues 174 to 175 (TD), 180 to 185 (FTADPR), and Lys-210 contribute to the ATP site. ACT domains lie at 267 to 348 (VTVV…GKVS) and 349 to 421 (LIGA…GTGR). Substrate-binding positions include Asp-274, 274-279 (DVPGYA), 292-294 (NID), Gln-298, 360-361 (VT), 374-375 (NI), and 381-382 (SE).

This sequence belongs to the aspartokinase family. As to quaternary structure, heterotetramer consisting of 2 isoforms Alpha (catalytic and regulation) and of a homodimer of 2 isoforms Beta (regulation).

The catalysed reaction is L-aspartate + ATP = 4-phospho-L-aspartate + ADP. The protein operates within amino-acid biosynthesis; L-lysine biosynthesis via DAP pathway; (S)-tetrahydrodipicolinate from L-aspartate: step 1/4. It participates in amino-acid biosynthesis; L-methionine biosynthesis via de novo pathway; L-homoserine from L-aspartate: step 1/3. Its pathway is amino-acid biosynthesis; L-threonine biosynthesis; L-threonine from L-aspartate: step 1/5. Feedback inhibition by lysine and threonine. Its function is as follows. Catalyzes the phosphorylation of the beta-carboxyl group of aspartic acid with ATP to yield 4-phospho-L-aspartate, which is involved in the branched biosynthetic pathway leading to the biosynthesis of amino acids lysine, threonine, isoleucine and methionine. This is Aspartokinase (ask) from Mycolicibacterium smegmatis (Mycobacterium smegmatis).